A 435-amino-acid polypeptide reads, in one-letter code: Serine carboxypeptidase-like 14 (435 aa).

An N-terminal signal peptide occupies residues 1–23 (MGSWIPKLLLLQLVLLLTKHADS). 3 disulfides stabilise this stretch: C82–C325, C246–C260, and C284–C291. N-linked (GlcNAc...) asparagine glycosylation occurs at N103. S178 is an active-site residue. N344 carries N-linked (GlcNAc...) asparagine glycosylation. D360 is a catalytic residue. N376 carries N-linked (GlcNAc...) asparagine glycosylation. H413 is a catalytic residue.

The protein belongs to the peptidase S10 family. Expressed in senescent leaves.

It is found in the secreted. Functionally, probable carboxypeptidase. The chain is Serine carboxypeptidase-like 14 (SCPL14) from Arabidopsis thaliana (Mouse-ear cress).